The chain runs to 86 residues: Small ribosomal subunit protein bS20 (86 aa).

The protein belongs to the bacterial ribosomal protein bS20 family.

Functionally, binds directly to 16S ribosomal RNA. The sequence is that of Small ribosomal subunit protein bS20 from Paenarthrobacter aurescens (strain TC1).